Reading from the N-terminus, the 220-residue chain is Small ribosomal subunit protein uS2 (220 aa).

Residues leucine 201 to arginine 220 are disordered.

It belongs to the universal ribosomal protein uS2 family.

This chain is Small ribosomal subunit protein uS2, found in Staphylothermus marinus (strain ATCC 43588 / DSM 3639 / JCM 9404 / F1).